We begin with the raw amino-acid sequence, 152 residues long: Lipoprotein signal peptidase (152 aa).

Helical transmembrane passes span 5-25, 61-81, and 84-104; these read LFVL…FWIV, WFFV…LATH, and LNIW…GNFI. Active-site residues include Asp114 and Asp130. A helical membrane pass occupies residues 125–145; that stretch reads IFNVADSYLTVGVILLVICLW.

The protein belongs to the peptidase A8 family.

Its subcellular location is the cell membrane. It catalyses the reaction Release of signal peptides from bacterial membrane prolipoproteins. Hydrolyzes -Xaa-Yaa-Zaa-|-(S,diacylglyceryl)Cys-, in which Xaa is hydrophobic (preferably Leu), and Yaa (Ala or Ser) and Zaa (Gly or Ala) have small, neutral side chains.. It participates in protein modification; lipoprotein biosynthesis (signal peptide cleavage). Functionally, this protein specifically catalyzes the removal of signal peptides from prolipoproteins. This chain is Lipoprotein signal peptidase, found in Streptococcus pyogenes serotype M3 (strain ATCC BAA-595 / MGAS315).